A 231-amino-acid chain; its full sequence is DNA mismatch repair protein MutH (231 aa).

The protein belongs to the MutH family.

Its subcellular location is the cytoplasm. Sequence-specific endonuclease that cleaves unmethylated GATC sequences. It is involved in DNA mismatch repair. This chain is DNA mismatch repair protein MutH, found in Salmonella paratyphi C (strain RKS4594).